Reading from the N-terminus, the 397-residue chain is Enoyl-[acyl-carrier-protein] reductase [NADH] (397 aa).

Residues 48–53 (GASTGY), 74–75 (FE), 111–112 (DA), and 139–140 (LA) contribute to the NAD(+) site. Residue Tyr224 participates in substrate binding. Tyr234 serves as the catalytic Proton donor. Residues Lys243 and 272–274 (VVT) contribute to the NAD(+) site.

This sequence belongs to the TER reductase family. Monomer.

The enzyme catalyses a 2,3-saturated acyl-[ACP] + NAD(+) = a (2E)-enoyl-[ACP] + NADH + H(+). It functions in the pathway lipid metabolism; fatty acid biosynthesis. Functionally, involved in the final reduction of the elongation cycle of fatty acid synthesis (FAS II). Catalyzes the reduction of a carbon-carbon double bond in an enoyl moiety that is covalently linked to an acyl carrier protein (ACP). This is Enoyl-[acyl-carrier-protein] reductase [NADH] from Pseudomonas fluorescens (strain SBW25).